A 153-amino-acid polypeptide reads, in one-letter code: Ribosomal RNA large subunit methyltransferase H (153 aa).

Residues L70, G102, and 121–126 (LSRMTF) each bind S-adenosyl-L-methionine.

The protein belongs to the RNA methyltransferase RlmH family. As to quaternary structure, homodimer.

It localises to the cytoplasm. The catalysed reaction is pseudouridine(1915) in 23S rRNA + S-adenosyl-L-methionine = N(3)-methylpseudouridine(1915) in 23S rRNA + S-adenosyl-L-homocysteine + H(+). Specifically methylates the pseudouridine at position 1915 (m3Psi1915) in 23S rRNA. The polypeptide is Ribosomal RNA large subunit methyltransferase H (Geotalea daltonii (strain DSM 22248 / JCM 15807 / FRC-32) (Geobacter daltonii)).